A 106-amino-acid polypeptide reads, in one-letter code: Violacin-A (106 aa).

A signal peptide spans 1 to 29 (MDAQKMKMVIGLVLVATTAFALMIPAASA). The propeptide occupies 30-79 (VDDFITRRAYDNLVKSGAIKDIPVMAKTIISNPVLEEGMLTYYTNKKLGD). 3 disulfides stabilise this stretch: cysteine 84–cysteine 98, cysteine 88–cysteine 100, and cysteine 93–cysteine 105.

Belongs to the cyclotide family. Moebius subfamily. Violacin-A is not a cyclic peptide.

Functionally, probably participates in a plant defense mechanism. Has low hemolytic activity. The protein is Violacin-A of Viola odorata (Sweet violet).